The chain runs to 246 residues: MQVSYFHVAADVPDAIGSVEGPDAAVVIDVLRATTTIAWALHNGAEAVQAFADLDELRLQSRNWPEQTRLLLGERGGRMLEGFDLGNSPVAVIPEVVQGKRLFMSTTNGTRALQRVRDVSVVMTVALPNRQAVAQRLLRDQPERVWMVGSGWEGTYSLEDSLAAGALADALVAAGAQVANDELQAALALWAQWKHDPEACLRVASHGQRLTRLGNHDADFSCCAGLDQLSVVPTQTEPGVLRAIRV.

Belongs to the ComB family. Mg(2+) serves as cofactor.

It carries out the reaction (2R)-O-phospho-3-sulfolactate + H2O = (2R)-3-sulfolactate + phosphate. This Synechococcus sp. (strain WH7803) protein is Probable 2-phosphosulfolactate phosphatase.